The primary structure comprises 150 residues: Copper transporter 3 (150 aa).

2 consecutive transmembrane segments (helical) span residues glycine 50–leucine 70 and leucine 100–valine 120.

It belongs to the copper transporter (Ctr) (TC 1.A.56) family. SLC31A subfamily.

It localises to the membrane. Its function is as follows. Involved in the transport of copper. The sequence is that of Copper transporter 3 (COPT3) from Oryza sativa subsp. japonica (Rice).